Consider the following 544-residue polypeptide: MGIASLERDTKGGTRFTGCTSIREFEFLGKLGEGTFGEVYKARAKRDGSIVALKKILMHNERDGFPITALREIKLLKMLSHTNIMQLREMAVERSKGEGRKKPSMYMVFPYMEHDLSGLLENPEVHFSEAQIKCYMIQLLEGLKYLHGNCILHRDMKAANLLISNQGILQIADFGLARPFDEAPPQPGKGAGEAKRDYTTLVVTRWYRPPELLLQLRRYTSAIDMWGVGCVFGEMFKGKPILAGNSDLNQAQLIFSLVGTPTEENMPGWSSLPGCEGVKHFGNRPGNLAEVFKDQGPMAISLLTELLKLDWRKRVNAIDALKHPYFSTPPLPARPGDLPSFEDSHELDRRRFRGQRAAMPPAPAGGSVGMSRNGGWSTNSGSRTGAETRNPRISSAARSQGNQLRDAWSNEPQQAWQRRGNEELKDPNHSFSSRHRDGGLPPKPPAPIQHSWASGHSDKTGRDRGYGARYGGPEGSVDSYVPNYGGSDRNRDRDQGTAISDRRGSYYDKSHQTSKLDYSREIPSRRRSRSPNYRERVDRGPYRR.

In terms of domain architecture, Protein kinase spans 25-326 (FEFLGKLGEG…AIDALKHPYF (302 aa)). ATP is bound by residues 31–39 (LGEGTFGEV) and K54. The active-site Proton acceptor is D155. A disordered region spans residues 357–544 (AAMPPAPAGG…ERVDRGPYRR (188 aa)). The segment covering 374-403 (GGWSTNSGSRTGAETRNPRISSAARSQGNQ) has biased composition (polar residues). Basic and acidic residues-rich tracts occupy residues 419 to 438 (RGNE…HRDG), 456 to 466 (HSDKTGRDRGY), 488 to 511 (DRNR…DKSH), and 532 to 544 (NYRE…PYRR).

This sequence belongs to the protein kinase superfamily. CMGC Ser/Thr protein kinase family. CDC2/CDKX subfamily.

It localises to the nucleus. The enzyme catalyses L-seryl-[protein] + ATP = O-phospho-L-seryl-[protein] + ADP + H(+). It carries out the reaction L-threonyl-[protein] + ATP = O-phospho-L-threonyl-[protein] + ADP + H(+). The catalysed reaction is [DNA-directed RNA polymerase] + ATP = phospho-[DNA-directed RNA polymerase] + ADP + H(+). Its function is as follows. Serine/threonine-protein kinase involved in transcription regulation. Phosphorylates the UBC2/RAD6 ubiquitin-conjugating enzyme (E2), leading to monoubiquitination of histone H2B and the silencing of telomeric-associated genes. Also required for histone H3 methylation. Necessary for the recovery from pheromone-induced growth arrest in the cell cycle G1 phase. In Emericella nidulans (strain FGSC A4 / ATCC 38163 / CBS 112.46 / NRRL 194 / M139) (Aspergillus nidulans), this protein is Serine/threonine-protein kinase bur1 (ptkA).